Consider the following 381-residue polypeptide: ELMO domain-containing protein 3 (381 aa).

The span at 1-17 (MNENFHSFHEKELRDGQ) shows a compositional bias: basic and acidic residues. A disordered region spans residues 1 to 31 (MNENFHSFHEKELRDGQVESVSAGSSPPCDK). The ELMO domain maps to 170–324 (MHGRVLQTIY…DLEMSAKKSP (155 aa)).

The protein localises to the cell projection. It is found in the stereocilium. It localises to the kinocilium. The protein resides in the cytoplasm. Its subcellular location is the cytoskeleton. Acts as a GTPase-activating protein (GAP) for ARL2 with low specific activity. This chain is ELMO domain-containing protein 3 (ELMOD3), found in Bos taurus (Bovine).